Here is a 453-residue protein sequence, read N- to C-terminus: Armadillo repeat-containing X-linked protein 1 (453 aa).

At 1–6 (MGRTRE) the chain is on the mitochondrial intermembrane side. 2 mitochondrion outer membrane (MOM)-targeting sequence regions span residues 1-6 (MGRTRE) and 26-36 (RLAWGRDENEK). The chain crosses the membrane as a helical; Signal-anchor span at residues 7–29 (AGCVAAGVVIGAGACYCVYRLAW). At 30–453 (GRDENEKIWD…VKVLKVLTKL (424 aa)) the chain is on the cytoplasmic side. Disordered stretches follow at residues 58–77 (AKTN…SEVK) and 132–182 (ISGN…RAPA). Positions 167–177 (GKSKGKARSKS) are enriched in basic residues. ARM repeat units follow at residues 195 to 235 (PYKI…NNAA), 237 to 276 (SFNQ…NLSV), 358 to 398 (PAMT…NIND), and 415 to 453 (SSLF…LTKL).

The protein belongs to the eutherian X-chromosome-specific Armcx family. Interacts with MIRO1. In terms of tissue distribution, expressed at high levels ovary, heart, testis, prostate, brain, spleen and colon. Expressed at very low levels in liver and thymus. Not expressed in peripheral blood leukocytes. Not or reduced expressed in lung, prostate, colon, pancreas and ovarian carcinomas.

The protein localises to the mitochondrion. It is found in the mitochondrion outer membrane. In terms of biological role, regulates mitochondrial transport during axon regeneration. Increases the proportion of motile mitochondria by recruiting stationary mitochondria into the motile pool. Enhances mitochondria movement and neurite growth in both adult axons and embryonic neurons. Promotes neuronal survival and axon regeneration after nerve injury. May link mitochondria to the Trak1-kinesin motor complex via its interaction with MIRO1. This is Armadillo repeat-containing X-linked protein 1 (ARMCX1) from Homo sapiens (Human).